The primary structure comprises 567 residues: DNA ligase B (567 aa).

The active-site N6-AMP-lysine intermediate is the lysine 132.

This sequence belongs to the NAD-dependent DNA ligase family. LigB subfamily.

It carries out the reaction NAD(+) + (deoxyribonucleotide)n-3'-hydroxyl + 5'-phospho-(deoxyribonucleotide)m = (deoxyribonucleotide)n+m + AMP + beta-nicotinamide D-nucleotide.. Its function is as follows. Catalyzes the formation of phosphodiester linkages between 5'-phosphoryl and 3'-hydroxyl groups in double-stranded DNA using NAD as a coenzyme and as the energy source for the reaction. The sequence is that of DNA ligase B from Yersinia pseudotuberculosis serotype O:1b (strain IP 31758).